The sequence spans 505 residues: ATP synthase subunit alpha (505 aa).

Position 169-176 (169-176 (GDRQTGKT)) interacts with ATP.

Belongs to the ATPase alpha/beta chains family. As to quaternary structure, F-type ATPases have 2 components, CF(1) - the catalytic core - and CF(0) - the membrane proton channel. CF(1) has five subunits: alpha(3), beta(3), gamma(1), delta(1), epsilon(1). CF(0) has three main subunits: a(1), b(2) and c(9-12). The alpha and beta chains form an alternating ring which encloses part of the gamma chain. CF(1) is attached to CF(0) by a central stalk formed by the gamma and epsilon chains, while a peripheral stalk is formed by the delta and b chains.

It localises to the cell membrane. It carries out the reaction ATP + H2O + 4 H(+)(in) = ADP + phosphate + 5 H(+)(out). Functionally, produces ATP from ADP in the presence of a proton gradient across the membrane. The alpha chain is a regulatory subunit. The protein is ATP synthase subunit alpha of Alkaliphilus metalliredigens (strain QYMF).